The sequence spans 728 residues: Catalase-peroxidase 2 (728 aa).

The interval 1–20 is disordered; the sequence is MSNEGKCPFNHGKRNGTTNR. The tryptophyl-tyrosyl-methioninium (Trp-Tyr) (with M-240) cross-link spans 91–214; it reads WHSAGTYRTG…LAAVQMGLIY (124 aa). The active-site Proton acceptor is H92. The segment at residues 214 to 240 is a cross-link (tryptophyl-tyrosyl-methioninium (Tyr-Met) (with W-91)); that stretch reads YVNPEGPNGNPDPLASARDIRETFARM. Residue H255 coordinates heme b. The segment at 335–355 is disordered; it reads AHQWQPKGGAGADSVPDPFEP.

This sequence belongs to the peroxidase family. Peroxidase/catalase subfamily. As to quaternary structure, homodimer or homotetramer. Heme b serves as cofactor. In terms of processing, formation of the three residue Trp-Tyr-Met cross-link is important for the catalase, but not the peroxidase activity of the enzyme.

The enzyme catalyses H2O2 + AH2 = A + 2 H2O. It carries out the reaction 2 H2O2 = O2 + 2 H2O. Its function is as follows. Bifunctional enzyme with both catalase and broad-spectrum peroxidase activity. This is Catalase-peroxidase 2 from Burkholderia cenocepacia (strain HI2424).